Here is a 278-residue protein sequence, read N- to C-terminus: Large ribosomal subunit protein uL2 (278 aa).

Residues V224–K278 form a disordered region.

The protein belongs to the universal ribosomal protein uL2 family. Part of the 50S ribosomal subunit. Forms a bridge to the 30S subunit in the 70S ribosome.

Its function is as follows. One of the primary rRNA binding proteins. Required for association of the 30S and 50S subunits to form the 70S ribosome, for tRNA binding and peptide bond formation. It has been suggested to have peptidyltransferase activity; this is somewhat controversial. Makes several contacts with the 16S rRNA in the 70S ribosome. The sequence is that of Large ribosomal subunit protein uL2 from Methylorubrum extorquens (strain CM4 / NCIMB 13688) (Methylobacterium extorquens).